An 86-amino-acid chain; its full sequence is Probable weak neurotoxin NNAM2 (86 aa).

The N-terminal stretch at 1–21 (MKTLLLTLVVVTIVCLDLGYT) is a signal peptide. 5 disulfides stabilise this stretch: Cys24-Cys45, Cys27-Cys32, Cys38-Cys63, Cys67-Cys78, and Cys79-Cys84.

Belongs to the three-finger toxin family. Ancestral subfamily. Orphan group II sub-subfamily. Expressed by the venom gland.

It is found in the secreted. Functionally, binds with low affinity to muscular (alpha-1-beta-1-delta-epsilon/CHRNA1-CHRNB1-CHRND-CHRNE) and very low affinity to neuronal (alpha-7/CHRNA7) nicotinic acetylcholine receptor (nAChR). The polypeptide is Probable weak neurotoxin NNAM2 (Naja atra (Chinese cobra)).